The chain runs to 806 residues: DEP domain-containing protein 1A (806 aa).

Positions 24 to 108 (FRAAMPLRKH…DNNSLYRFPS (85 aa)) constitute a DEP domain. The tract at residues 142 to 177 (QFSKKTPKRRASVDSKEEQENEDLMEDQRNDDDFPK) is disordered. Basic and acidic residues predominate over residues 167–177 (EDQRNDDDFPK). In terms of domain architecture, Rho-GAP spans 279–319 (DYFLNLPEPLLTFEFYELFVNILVVCGYITVPNSHNGKHRF). Residues 564–588 (SHSSFPSTSSLLPPTTSPNSTGSES) are disordered.

The chain is DEP domain-containing protein 1A (depdc1a) from Xenopus laevis (African clawed frog).